Consider the following 289-residue polypeptide: Pantoate kinase (289 aa).

It belongs to the GHMP kinase family. PoK subfamily.

It catalyses the reaction (R)-pantoate + ATP = (R)-4-phosphopantoate + ADP + H(+). The protein operates within cofactor biosynthesis; coenzyme A biosynthesis. In terms of biological role, phosphorylates (R)-pantoate to form (R)-4-phosphopantoate in the CoA biosynthesis pathway. ATP is the best phosphate donor. Can be replaced with UTP, with lower efficiency. The polypeptide is Pantoate kinase (Methanospirillum hungatei JF-1 (strain ATCC 27890 / DSM 864 / NBRC 100397 / JF-1)).